The chain runs to 349 residues: MKLGDFDFDLPEELIATRPAVPRSSARLLVAEQDRISDGRVTDLLDWLAPGDRLVLNDTRVIPARLSGQRHRNSAQGPVSARIEVTLLEPQADGSWAGLLKPLKKIKIGETLRFSDALSAELVDVVDGQGRLRFNLAGDDFDAALAEAGAMPLPPYIAAKRPADEQDKTDYQTVWARNSGAVAAPTASLHFDEPLLKALSEKGVTFTYVTLHVGAGTFLPVKVEDVTTHKMHAEWGQVTPEAAAEIAATKAAGNRVIPVGTTALRLIESAARESGAITPWEGETDIFIYPGFEFRVADALMTNFHLPKSTLMMLVSALMGQDRIRAIYAHAVKERYRFFSYGDASLLIP.

The protein belongs to the QueA family. Monomer.

Its subcellular location is the cytoplasm. The catalysed reaction is 7-aminomethyl-7-carbaguanosine(34) in tRNA + S-adenosyl-L-methionine = epoxyqueuosine(34) in tRNA + adenine + L-methionine + 2 H(+). The protein operates within tRNA modification; tRNA-queuosine biosynthesis. Its function is as follows. Transfers and isomerizes the ribose moiety from AdoMet to the 7-aminomethyl group of 7-deazaguanine (preQ1-tRNA) to give epoxyqueuosine (oQ-tRNA). The sequence is that of S-adenosylmethionine:tRNA ribosyltransferase-isomerase from Ruegeria sp. (strain TM1040) (Silicibacter sp.).